Consider the following 274-residue polypeptide: MPFRSNNPITRDELLSRFFPQFHPVTTFNSGLSGGSFLIEHQGQRFVVRQPHDPDAPQSAFLRQYRALSQLPACIAPKPHLYLRDWMVVDYLPGEVKTYLPDTNELAGLLYYLHQQPRFGWRITLLPLLELYWQQSDPARRTVGWLRMLKRLRKAREPRPLRLSPLHMDVHAGNLVHSASGLKLIDWEYAGDGDIALELAAVWVENTEQHRQLVNDYATRAKIYPAQLWRQVRRWFPWLLMLKAGWFEYRWRQTGDQQFIRLADDTWRQLLIKQ.

This sequence belongs to the thiamine kinase family.

It carries out the reaction thiamine + ATP = thiamine phosphate + ADP + H(+). It participates in cofactor biosynthesis; thiamine diphosphate biosynthesis; thiamine phosphate from thiamine: step 1/1. Functionally, catalyzes the ATP-dependent phosphorylation of thiamine to thiamine phosphate. Is involved in thiamine salvage. In Escherichia coli O157:H7, this protein is Thiamine kinase.